A 301-amino-acid polypeptide reads, in one-letter code: MAKPLTITSSHSHFSLAWRAYFEMTKPKVVALMLLTVLVGMCLAVPTAVPVQPLIAGMFGIALMAGSAAALNHLIDRRIDGMMARTYNRPLPKGRVSAKRALIFAASIGGLGFVVLYVLVNPLTAWLTFASLIGYALVYTAYLKRATSQNIVIGGLAGAMPPLLGWTAVTNQFHGHALLLVIIIFTWTPPHFWALAIHRRAEYAKVDIPMLPVTHGVEFTKTCILLYTVLLAIACLLPVLVGMCGPMYFVCSSLLSSVFIYKAWQLKYRDRDGLAMQVFRFSIYHLMLLFMALLIDHYLWS.

9 consecutive transmembrane segments (helical) span residues 29–49 (VVAL…PTAV), 51–71 (VQPL…AAAL), 101–121 (ALIF…VLVN), 123–143 (LTAW…TAYL), 150–170 (NIVI…TAVT), 177–197 (ALLL…ALAI), 223–243 (CILL…LVGM), 244–264 (CGPM…YKAW), and 281–301 (FSIY…YLWS).

It belongs to the UbiA prenyltransferase family. Protoheme IX farnesyltransferase subfamily.

The protein localises to the cell inner membrane. It catalyses the reaction heme b + (2E,6E)-farnesyl diphosphate + H2O = Fe(II)-heme o + diphosphate. It participates in porphyrin-containing compound metabolism; heme O biosynthesis; heme O from protoheme: step 1/1. In terms of biological role, converts heme B (protoheme IX) to heme O by substitution of the vinyl group on carbon 2 of heme B porphyrin ring with a hydroxyethyl farnesyl side group. The chain is Protoheme IX farnesyltransferase 1 from Shewanella putrefaciens (strain CN-32 / ATCC BAA-453).